We begin with the raw amino-acid sequence, 442 residues long: Chromosomal replication initiator protein DnaA (442 aa).

Residues 1–75 are domain I, interacts with DnaA modulators; it reads MDAWPRCLER…GNGEVALAVG (75 aa). The interval 75-104 is domain II; that stretch reads GSRPRAPEPLPAPQAVASAPAAAPIVPFAG. The domain III, AAA+ region stretch occupies residues 105-322; the sequence is NLDSHYTFAN…GALNTLVARA (218 aa). Residues glycine 150, glycine 152, lysine 153, and threonine 154 each contribute to the ATP site. The interval 323–442 is domain IV, binds dsDNA; sequence NFTGRSITVE…WEKLIRKLSE (120 aa).

This sequence belongs to the DnaA family. In terms of assembly, oligomerizes as a right-handed, spiral filament on DNA at oriC.

It localises to the cytoplasm. Its function is as follows. Plays an essential role in the initiation and regulation of chromosomal replication. ATP-DnaA binds to the origin of replication (oriC) to initiate formation of the DNA replication initiation complex once per cell cycle. Binds the DnaA box (a 9 base pair repeat at the origin) and separates the double-stranded (ds)DNA. Forms a right-handed helical filament on oriC DNA; dsDNA binds to the exterior of the filament while single-stranded (ss)DNA is stabiized in the filament's interior. The ATP-DnaA-oriC complex binds and stabilizes one strand of the AT-rich DNA unwinding element (DUE), permitting loading of DNA polymerase. After initiation quickly degrades to an ADP-DnaA complex that is not apt for DNA replication. Binds acidic phospholipids. This Xanthomonas campestris pv. campestris (strain B100) protein is Chromosomal replication initiator protein DnaA.